We begin with the raw amino-acid sequence, 99 residues long: MSLKSWKEIPIGGVIDKPGTAREYKTGAWRVMRPILHKEKCIDCMFCWLYCPDQAIIQEGGIMKGFNYDYCKGCGLCANVCPKQAIEMRPETEFLSEEG.

4Fe-4S ferredoxin-type domains are found at residues 32-60 (MRPILHKEKCIDCMFCWLYCPDQAIIQEG) and 61-91 (GIMKGFNYDYCKGCGLCANVCPKQAIEMRPE). Cys-41, Cys-44, Cys-47, Cys-51, Cys-71, Cys-74, Cys-77, and Cys-81 together coordinate [4Fe-4S] cluster.

As to quaternary structure, heterotetramer of one alpha, one beta, one delta and one gamma chain. [4Fe-4S] cluster is required as a cofactor.

This chain is Pyruvate synthase subunit PorD (porD), found in Thermotoga maritima (strain ATCC 43589 / DSM 3109 / JCM 10099 / NBRC 100826 / MSB8).